The following is a 297-amino-acid chain: 33 kDa chaperonin (297 aa).

2 disulfide bridges follow: cysteine 232-cysteine 234 and cysteine 266-cysteine 269.

The protein belongs to the HSP33 family. In terms of processing, under oxidizing conditions two disulfide bonds are formed involving the reactive cysteines. Under reducing conditions zinc is bound to the reactive cysteines and the protein is inactive.

It localises to the cytoplasm. Functionally, redox regulated molecular chaperone. Protects both thermally unfolding and oxidatively damaged proteins from irreversible aggregation. Plays an important role in the bacterial defense system toward oxidative stress. The sequence is that of 33 kDa chaperonin from Azotobacter vinelandii (strain DJ / ATCC BAA-1303).